Here is a 126-residue protein sequence, read N- to C-terminus: Large ribosomal subunit protein bL20c (126 aa).

The protein belongs to the bacterial ribosomal protein bL20 family.

Its subcellular location is the plastid. It is found in the chloroplast. Binds directly to 23S ribosomal RNA and is necessary for the in vitro assembly process of the 50S ribosomal subunit. It is not involved in the protein synthesizing functions of that subunit. The chain is Large ribosomal subunit protein bL20c from Illicium oligandrum (Star anise).